A 589-amino-acid polypeptide reads, in one-letter code: Protein NRT1/ PTR FAMILY 4.7 (589 aa).

Transmembrane regions (helical) follow at residues 59-79 (GMLA…AFLA), 105-125 (AFMG…DAFF), 127-147 (TFHI…VLTV), 160-180 (VFLF…KGSL), 201-221 (FFFN…VTVV), 230-250 (WSYG…VFLA), 344-364 (IVIK…CLAQ), 383-403 (FTVP…ILAP), 429-449 (IGTG…VETK), 471-491 (LPIT…ADLF), 520-540 (LAMG…VTGL), and 560-580 (FYWL…FWAS).

Belongs to the major facilitator superfamily. Proton-dependent oligopeptide transporter (POT/PTR) (TC 2.A.17) family. As to expression, expressed in flowers.

The protein localises to the membrane. The chain is Protein NRT1/ PTR FAMILY 4.7 (NPF4.7) from Arabidopsis thaliana (Mouse-ear cress).